The chain runs to 398 residues: Lysophospholipid transporter LplT (398 aa).

Transmembrane regions (helical) follow at residues 17-37 (AVLVSQFFSAFADNALLFAIL), 52-72 (ILQIVFVLAYILLAPFVGQIA), 90-110 (LGAFTICLGYDPFLGYALVGV), 137-157 (GLMEASTIIAILTGSVVGGFL), 163-183 (AIALLVCALMYGIAVVANFFI), 226-246 (LFWGAGITLRFLLVLWVPVVL), 256-276 (ILNVMVAVGIIIGAGAAARFI), 285-305 (MPAGVLIGVMVVIFAVQHSIW), 309-329 (VLLIILGIFGGLFIVPLNALL), 352-372 (IAMLLMLGLYSLVIKIGVPVV), and 373-393 (TTGIGFGTLLALTITSLWIWN).

The protein belongs to the major facilitator superfamily. LplT (TC 2.A.1.42) family.

Its subcellular location is the cell inner membrane. Catalyzes the facilitated diffusion of 2-acyl-glycero-3-phosphoethanolamine (2-acyl-GPE) into the cell. The chain is Lysophospholipid transporter LplT from Photorhabdus laumondii subsp. laumondii (strain DSM 15139 / CIP 105565 / TT01) (Photorhabdus luminescens subsp. laumondii).